The primary structure comprises 112 residues: uncharacterized protein (112 aa).

The tract at residues 70-112 (GLYRGRRPPGRDAARPTTAILFAQGRPPLLDQRAPTRRGSHQR) is disordered.

This is an uncharacterized protein from Homo sapiens (Human).